The chain runs to 299 residues: Biphenyl-2,3-diol 1,2-dioxygenase (299 aa).

2 consecutive VOC domains span residues 6-121 and 146-267; these read ELGY…IFYG and GIGH…FGWG. Histidine 149, histidine 212, and glutamate 263 together coordinate Fe cation.

It belongs to the extradiol ring-cleavage dioxygenase family. In terms of assembly, homooctamer. Fe(2+) serves as cofactor.

It catalyses the reaction biphenyl-2,3-diol + O2 = 2-hydroxy-6-oxo-6-phenylhexa-2,4-dienoate + H(+). It participates in xenobiotic degradation; biphenyl degradation; 2-hydroxy-2,4-pentadienoate and benzoate from biphenyl: step 3/4. This is Biphenyl-2,3-diol 1,2-dioxygenase (bphC) from Sphingomonas paucimobilis (Pseudomonas paucimobilis).